Here is a 262-residue protein sequence, read N- to C-terminus: Ribonuclease 3 (262 aa).

Residues 18–141 form the RNase III domain; the sequence is LATFLKNLDI…LVGAIYEDMG (124 aa). Glu-59 serves as a coordination point for Mg(2+). Asp-63 is a catalytic residue. Residues Asp-127 and Glu-130 each contribute to the Mg(2+) site. Glu-130 is a catalytic residue.

This sequence belongs to the ribonuclease III family. Homodimer. The cofactor is Mg(2+).

Its subcellular location is the cytoplasm. The enzyme catalyses Endonucleolytic cleavage to 5'-phosphomonoester.. Digests double-stranded RNA. Involved in the processing of primary rRNA transcript to yield the immediate precursors to the large and small rRNAs (23S and 16S). Processes some mRNAs, and tRNAs when they are encoded in the rRNA operon. Processes pre-crRNA and tracrRNA of type II CRISPR loci if present in the organism. This is Ribonuclease 3 from Mycoplasma genitalium (strain ATCC 33530 / DSM 19775 / NCTC 10195 / G37) (Mycoplasmoides genitalium).